The primary structure comprises 68 residues: DPATCEKEAQFVKQELIGQPYTDAVANALQSNPIRVLHPGDMITMEYIASRLNIQVNENNEIISAHCA.

Cysteines 5 and 67 form a disulfide.

It localises to the secreted. In terms of biological role, elastase inhibitor. Inhibitor of A.flavus elastase with a Ki of 40 nM. Inhibitor of A.fumigatus elastase and human leukocyte elastase. Inhibits the fibrinogenase and collagenase activities of A.flavus elastase. Does not inhibit porcine pancreatic elastase, trypsin, chymotrypsin, thrombin or A.acutus AC1-proteinase. This chain is Elastase inhibitor AFLEI, found in Aspergillus flavus.